A 684-amino-acid chain; its full sequence is U4/U6 small nuclear ribonucleoprotein Prp3 (684 aa).

Residues M1–R87 form the PWI domain. Basic and acidic residues predominate over residues G73–G107. Disordered regions lie at residues G73–K109 and F162–I183. Over residues P170–I183 the composition is skewed to polar residues.

As to quaternary structure, component of the precatalytic spliceosome (spliceosome B complex). Component of the U4/U6-U5 tri-snRNP complex, a building block of the precatalytic spliceosome (spliceosome B complex). The U4/U6-U5 tri-snRNP complex is composed of the U4, U6 and U5 snRNAs and at least PRPF3, PRPF4, PRPF6, PRPF8, PRPF31, SNRNP200, TXNL4A, SNRNP40, SNRPB, SNRPD1, SNRPD2, SNRPD3, SNRPE, SNRPF, SNRPG, DDX23, CD2BP2, PPIH, SNU13, EFTUD2, SART1 and USP39, plus LSM2, LSM3, LSM4, LSM5, LSM6, LSM7 and LSM8.

It is found in the nucleus. The protein localises to the nucleus speckle. Its function is as follows. Plays a role in pre-mRNA splicing as component of the U4/U6-U5 tri-snRNP complex that is involved in spliceosome assembly, and as component of the precatalytic spliceosome (spliceosome B complex). This chain is U4/U6 small nuclear ribonucleoprotein Prp3 (PRPF3), found in Gallus gallus (Chicken).